Reading from the N-terminus, the 579-residue chain is O-fucosyltransferase 24 (579 aa).

A helical; Signal-anchor for type II membrane protein transmembrane segment spans residues leucine 58–cysteine 78. Asparagine 133 carries N-linked (GlcNAc...) asparagine glycosylation. Histidine 355–arginine 357 provides a ligand contact to substrate. Asparagine 528, asparagine 573, and asparagine 576 each carry an N-linked (GlcNAc...) asparagine glycan.

It belongs to the glycosyltransferase GT106 family.

It localises to the membrane. It participates in glycan metabolism. This is O-fucosyltransferase 24 from Arabidopsis thaliana (Mouse-ear cress).